A 137-amino-acid polypeptide reads, in one-letter code: Small ribosomal subunit protein bS6 (137 aa).

Residues 96–137 form a disordered region; sequence ITEASPMAKAKDERDTRRSSEERAPRAEAAEEVEESAENTAE. Basic and acidic residues predominate over residues 104-124; sequence KAKDERDTRRSSEERAPRAEA. Acidic residues predominate over residues 125 to 137; that stretch reads AEEVEESAENTAE.

This sequence belongs to the bacterial ribosomal protein bS6 family.

Functionally, binds together with bS18 to 16S ribosomal RNA. The protein is Small ribosomal subunit protein bS6 of Shewanella halifaxensis (strain HAW-EB4).